The following is a 285-amino-acid chain: HTH-type transcriptional activator AmpR (285 aa).

One can recognise an HTH lysR-type domain in the interval 5-62 (LPLNALRAFEASARHLSFTRAALELCVTQAAVSQQVRILEDRLNRVLFKRLPRGLEMT). Residues 22–41 (FTRAALELCVTQAAVSQQVR) constitute a DNA-binding region (H-T-H motif).

Belongs to the LysR transcriptional regulatory family.

The protein localises to the cytoplasm. Its function is as follows. This protein is a positive regulator of gene expression of beta-lactamase (AmpC). The polypeptide is HTH-type transcriptional activator AmpR (ampR) (Citrobacter koseri (Citrobacter diversus)).